The chain runs to 206 residues: Glycerol-3-phosphate acyltransferase (206 aa).

6 helical membrane-spanning segments follow: residues 4–24, 55–75, 78–98, 112–132, 137–157, and 158–178; these read IIGILILGYLLGSIPFALLVG, IIVLIGDLGKGAVASLVPILL, ELHPLFAGLAAVVGHIYPVFA, MLLVTSPILFLVLLISFLTTL, MVSLSSIVSASIGIVAAITIG, and IVEQDWIVPTFFTILALFVIF.

This sequence belongs to the PlsY family. Probably interacts with PlsX.

It is found in the cell membrane. The catalysed reaction is an acyl phosphate + sn-glycerol 3-phosphate = a 1-acyl-sn-glycero-3-phosphate + phosphate. Its pathway is lipid metabolism; phospholipid metabolism. In terms of biological role, catalyzes the transfer of an acyl group from acyl-phosphate (acyl-PO(4)) to glycerol-3-phosphate (G3P) to form lysophosphatidic acid (LPA). This enzyme utilizes acyl-phosphate as fatty acyl donor, but not acyl-CoA or acyl-ACP. This Exiguobacterium sibiricum (strain DSM 17290 / CCUG 55495 / CIP 109462 / JCM 13490 / 255-15) protein is Glycerol-3-phosphate acyltransferase.